A 573-amino-acid chain; its full sequence is Oxygen sensor histidine kinase response regulator DosT (573 aa).

2 GAF domains span residues 61–198 and 229–366; these read KLDA…GIAV and DPAM…ALAW. A heme-binding site is contributed by histidine 147. The Histidine kinase domain maps to 380-573; it reads ILTDRDRIAR…TLLRWSAPLR (194 aa). Histidine 392 is modified (phosphohistidine; by autocatalysis).

Requires Mg(2+) as cofactor. Heme is required as a cofactor.

It is found in the cytoplasm. In terms of biological role, interacts with the two-component regulatory system DevR/DevS (DosR/DosS) involved in onset of the dormancy response. Required for full induction of the DevR (DosR) regulon; required during early adaptation to anaerobiosis, to start induction of the DevR regulon. May act as a direct hypoxia/oxygen sensor. May be the secondary sensor for CO. Donates a phosphate group to DevR (DosR). In Mycobacterium tuberculosis (strain CDC 1551 / Oshkosh), this protein is Oxygen sensor histidine kinase response regulator DosT (dosT).